The following is a 154-amino-acid chain: Small ribosomal subunit protein bS16 (154 aa).

Low complexity predominate over residues 111-121 (AAAGLAEAPTK). Residues 111-154 (AAAGLAEAPTKPAKKAAKAEAAPKTDEAAPKTEEQAGAGSGEQG) form a disordered region. A compositionally biased stretch (basic and acidic residues) spans 127–144 (AKAEAAPKTDEAAPKTEE).

This sequence belongs to the bacterial ribosomal protein bS16 family.

The polypeptide is Small ribosomal subunit protein bS16 (Salinispora tropica (strain ATCC BAA-916 / DSM 44818 / JCM 13857 / NBRC 105044 / CNB-440)).